We begin with the raw amino-acid sequence, 1357 residues long: DNA-directed RNA polymerase subunit beta (1357 aa).

Belongs to the RNA polymerase beta chain family. In terms of assembly, the RNAP catalytic core consists of 2 alpha, 1 beta, 1 beta' and 1 omega subunit. When a sigma factor is associated with the core the holoenzyme is formed, which can initiate transcription.

The catalysed reaction is RNA(n) + a ribonucleoside 5'-triphosphate = RNA(n+1) + diphosphate. In terms of biological role, DNA-dependent RNA polymerase catalyzes the transcription of DNA into RNA using the four ribonucleoside triphosphates as substrates. The protein is DNA-directed RNA polymerase subunit beta of Pseudomonas fluorescens (strain SBW25).